Reading from the N-terminus, the 353-residue chain is Protein MGF 360-11L (353 aa).

One copy of the ANK repeat lies at 59–88; the sequence is ELNTVLMKAAKENNHDLIRLFVEWGADINY.

Belongs to the asfivirus MGF 360 family. Interacts with host TBK1 ad IRF7.

Plays a role in virus cell tropism, and may be required for efficient virus replication in macrophages. In addition, inhibits the phosphorylation of host TBK1 and IRF7 and thereby negatively regulates the host cGAS signaling pathway and antagonizes IFN-mediated antiviral activity. The chain is Protein MGF 360-11L from African swine fever virus (isolate Pig/Kenya/KEN-50/1950) (ASFV).